The following is a 392-amino-acid chain: Cyclic AMP receptor 1 (392 aa).

Over 1 to 13 (MGLLDGNPANETS) the chain is Extracellular. An N-linked (GlcNAc...) asparagine glycan is attached at asparagine 10. The chain crosses the membrane as a helical span at residues 14 to 33 (LVLLLFADFSSMLGCMAVLI). Over 34-47 (GFWRLKLLRNHVTK) the chain is Cytoplasmic. A helical membrane pass occupies residues 48–68 (VIACFCATSFCKDFPSTILTL). The Extracellular segment spans residues 69-83 (TNTAVNGGFPCYLYA). The helical transmembrane segment at 84–109 (IVITYGSFACWLWTLCLAISIYMLIV) threads the bilayer. The Cytoplasmic segment spans residues 110-120 (KREPEPERFEK). The helical transmembrane segment at 121–139 (YYYLLCWGLPLISTIVMLA) threads the bilayer. The Extracellular segment spans residues 140–162 (KNTVQFVGNWCWIGVSFTGYRFG). A helical transmembrane segment spans residues 163 to 181 (LFYGPFLFIWAISAVLVGL). The Cytoplasmic segment spans residues 182-205 (TSRYTYVVIHNGVSDNKEKHLTYQ). A helical transmembrane segment spans residues 206–224 (FKLINYIIVFLVCWVFAVV). At 225 to 235 (NRIVNGLNMFP) the chain is on the extracellular side. Residues 236–260 (PALNILHTYLSVSHGFWASVTFIYN) traverse the membrane as a helical segment. Over 261 to 392 (NPLMWRYFGA…STSTNGQGNN (132 aa)) the chain is Cytoplasmic. 2 disordered regions span residues 292-324 (NKNN…VQCS) and 339-392 (VNNQ…QGNN). The span at 298–310 (PSPYSSSRGTSGK) shows a compositional bias: polar residues. Serine 299, serine 302, serine 303, serine 304, serine 308, serine 360, serine 361, serine 362, serine 363, serine 364, serine 366, serine 367, and serine 368 each carry phosphoserine. Low complexity predominate over residues 340 to 367 (NNQQNLNNNYGLQQNYNDEGSSSSSLSS). Residues 375–392 (VEMQNIQISTSTNGQGNN) are compositionally biased toward polar residues.

It belongs to the G-protein coupled receptor 5 family. In terms of processing, C-terminal Ser or Thr residues may be phosphorylated.

The protein localises to the membrane. In terms of biological role, receptor for cAMP. Coordinates the aggregation of individual cells into a multicellular organism and regulates the expression of a large number of developmentally regulated genes. The activity of this receptor is mediated by G proteins. In Dictyostelium discoideum (Social amoeba), this protein is Cyclic AMP receptor 1 (carA-1).